The sequence spans 1210 residues: Epidermal growth factor receptor (1210 aa).

The signal sequence occupies residues 1-24; the sequence is MRPSGTARTTLLVLLTALCAAGGA. At 25 to 647 the chain is on the extracellular side; that stretch reads LEEKKVCQGT…VWPSGPKIPS (623 aa). Cys-31 and Cys-58 form a disulfide bridge. An Approximate repeat occupies 75–300; sequence DLSFLKTIQE…CVKKCPRNYV (226 aa). Asn-128, Asn-175, and Asn-196 each carry an N-linked (GlcNAc...) asparagine glycan. Disulfide bonds link Cys-157–Cys-187, Cys-190–Cys-199, Cys-194–Cys-207, Cys-215–Cys-223, Cys-219–Cys-231, Cys-232–Cys-240, Cys-236–Cys-248, Cys-251–Cys-260, Cys-264–Cys-291, Cys-295–Cys-307, Cys-311–Cys-326, Cys-329–Cys-333, and Cys-337–Cys-362. Ser-229 bears the Phosphoserine mark. N-linked (GlcNAc...) asparagine glycosylation is found at Asn-352, Asn-413, and Asn-444. Residues 390-600 form an Approximate repeat; the sequence is RELEILKTVK…CVKTCPAGIM (211 aa). 11 disulfides stabilise this stretch: Cys-470/Cys-499, Cys-506/Cys-515, Cys-510/Cys-523, Cys-526/Cys-535, Cys-539/Cys-555, Cys-558/Cys-571, Cys-562/Cys-579, Cys-582/Cys-591, Cys-595/Cys-617, Cys-620/Cys-628, and Cys-624/Cys-636. N-linked (GlcNAc...) asparagine glycosylation occurs at Asn-528. The N-linked (GlcNAc...) asparagine glycan is linked to Asn-568. Residues Asn-603 and Asn-623 are each glycosylated (N-linked (GlcNAc...) asparagine). Residues 648–670 form a helical membrane-spanning segment; the sequence is IATGIVGGLLFIVVVALGIGLFM. At 671–1210 the chain is on the cytoplasmic side; that stretch reads RRRHIVRKRT…APPSSEFIGA (540 aa). Thr-680 is subject to Phosphothreonine; by PKC and PKD/PRKD1. An important for dimerization, phosphorylation and activation region spans residues 690-706; sequence LVEPLTPSGEAPNQAHL. The residue at position 695 (Thr-695) is a Phosphothreonine; by PKD/PRKD1. Ser-697 carries the phosphoserine modification. A Protein kinase domain is found at 714–981; sequence FKKIKVLGSG…KMARDPQRYL (268 aa). A Glycyl lysine isopeptide (Lys-Gly) (interchain with G-Cter in ubiquitin) cross-link involves residue Lys-718. 720–728 is a binding site for ATP; it reads LGSGAFGTV. Residue Lys-739 forms a Glycyl lysine isopeptide (Lys-Gly) (interchain with G-Cter in ubiquitin) linkage. Residue Lys-747 participates in ATP binding. Residue Lys-747 is modified to N6-(2-hydroxyisobutyryl)lysine. Glycyl lysine isopeptide (Lys-Gly) (interchain with G-Cter in ubiquitin) cross-links involve residues Lys-756 and Lys-759. 792–793 contacts ATP; it reads TQ. Catalysis depends on Asp-839, which acts as the Proton acceptor. An ATP-binding site is contributed by Asp-857. Lys-869 participates in a covalent cross-link: Glycyl lysine isopeptide (Lys-Gly) (interchain with G-Cter in ubiquitin). Tyr-871 carries the post-translational modification Phosphotyrosine. Residues Lys-931, Lys-962, and Lys-972 each participate in a glycyl lysine isopeptide (Lys-Gly) (interchain with G-Cter in ubiquitin) cross-link. Phosphoserine occurs at positions 993 and 997. Phosphotyrosine; by autocatalysis occurs at positions 1000 and 1018. A phosphoserine mark is found at Ser-1028 and Ser-1041. Residue Thr-1043 is modified to Phosphothreonine. Residue Ser-1044 is modified to Phosphoserine. Residue Cys-1051 is the site of S-palmitoyl cysteine attachment. Tyr-1069 carries the phosphotyrosine modification. 2 positions are modified to phosphoserine: Ser-1070 and Ser-1071. 2 positions are modified to phosphotyrosine; by autocatalysis: Tyr-1092 and Tyr-1110. Residues 1113–1137 are disordered; sequence QPLHPAPGRDLHYQNPHSNAVGNPE. The span at 1127–1137 shows a compositional bias: polar residues; the sequence is NPHSNAVGNPE. Residue Cys-1146 is the site of S-palmitoyl cysteine attachment. At Ser-1166 the chain carries Phosphoserine. A Phosphotyrosine; by autocatalysis modification is found at Tyr-1172. Position 1197 is a phosphotyrosine (Tyr-1197). Arg-1199 is subject to Omega-N-methylarginine.

The protein belongs to the protein kinase superfamily. Tyr protein kinase family. EGF receptor subfamily. As to quaternary structure, binding of the ligand triggers homo- and/or heterodimerization of the receptor triggering its autophosphorylation. Heterodimer with ERBB2. Forms a complex with CCDC88A/GIV (via SH2-like region) and GNAI3 which leads to enhanced EGFR signaling and triggering of cell migration; binding of CCDC88A requires autophosphorylation of the EGFR C-terminal region, and ligand stimulation is required for recruitment of GNAI3 to the complex. Interacts with ERRFI1; inhibits dimerization of the kinase domain and autophosphorylation. Part of a complex with ERBB2 and either PIK3C2A or PIK3C2B. Interacts with GRB2; an adapter protein coupling the receptor to downstream signaling pathways. Interacts with GAB2; involved in signaling downstream of EGFR. Interacts with STAT3; mediates EGFR downstream signaling in cell proliferation. Interacts with RIPK1; involved in NF-kappa-B activation. Interacts (autophosphorylated) with CBL, CBLB and CBLC; involved in EGFR ubiquitination and regulation; interaction with CBL is reduced in the presence of tensin TNS4. Interacts with SOCS5; regulates EGFR degradation through ELOC- and ELOB-mediated ubiquitination and proteasomal degradation. Interacts with PRMT5; methylates EGFR and enhances interaction with PTPN6. Interacts (phosphorylated) with PTPN6; inhibits EGFR-dependent activation of MAPK/ERK. Interacts with COPG1; essential for regulation of EGF-dependent nuclear transport of EGFR by retrograde trafficking from the Golgi to the ER. Interacts with TNK2; this interaction is dependent on EGF stimulation and kinase activity of EGFR. Interacts with PCNA; positively regulates PCNA. Interacts with PELP1. Interacts with MUC1. Interacts with AP2M1. Interacts with FER. Interacts (via SH2 domains) with GRB2, NCK1 and NCK2. Interacts with EPS8; mediates EPS8 phosphorylation. Interacts with ATXN2. Interacts with GAREM1. Interacts (ubiquitinated) with ANKRD13A/B/D; the interaction is direct and may regulate EGFR internalization after EGF stimulation. Interacts with GPER1; the interaction occurs in an estrogen-dependent manner. Interacts (via C-terminal cytoplasmic kinase domain) with ZPR1 (via zinc fingers). Interacts with RNF115 and RNF126. Interacts with GPRC5A (via its transmembrane domain). Interacts with FAM83B; positively regulates EGFR inducing its autophosphorylation in absence of stimulation by EGF. Interacts with LAPTM4B; positively correlates with EGFR activation. Interacts with STX19. Interacts with CD44. Interacts with PGRMC1; the interaction requires PGRMC1 homodimerization. Interacts with PIKFYVE. Interacts with NEU3. Interacts with TRAF4. Interacts with the ant venom OMEGA-myrmeciitoxin(02)-Mg1a. Interacts with CD82; this interaction facilitates ligand-induced endocytosis of the receptor and its subsequent desensitization. In terms of processing, monoubiquitinated and polyubiquitinated upon EGF stimulation; which does not affect tyrosine kinase activity or signaling capacity but may play a role in lysosomal targeting. Polyubiquitin linkage is mainly through 'Lys-63', but linkage through 'Lys-48', 'Lys-11' and 'Lys-29' also occurs. Deubiquitinated by OTUD7B, preventing degradation. Ubiquitinated by RNF115 and RNF126. Ubiquitinated by ZNRF1 or CBL at different lysines in response to EGF stimulation; leading to recruitment of the ESCRT machinery and subsequent degradation in the lysosomes. Deubiquitinated by UCHL1 leading to the inhibition of its degradation. Phosphorylated on Tyr residues in response to EGF. Phosphorylation at Ser-697 is partial and occurs only if Thr-695 is phosphorylated. Phosphorylation at Thr-680 and Thr-695 by PRKD1 inhibits EGF-induced MAPK8/JNK1 activation. Dephosphorylation by PTPRJ prevents endocytosis and stabilizes the receptor at the plasma membrane. Autophosphorylation at Tyr-1199 is stimulated by methylation at Arg-1199 and enhances interaction with PTPN6. Autophosphorylation at Tyr-1092 and/or Tyr-1110 recruits STAT3. Dephosphorylated by PTPN1 and PTPN2. Post-translationally, palmitoylated on Cys residues by ZDHHC20. Palmitoylation inhibits internalization after ligand binding, and increases the persistence of tyrosine-phosphorylated EGFR at the cell membrane. Palmitoylation increases the amplitude and duration of EGFR signaling. In terms of processing, methylated. Methylation at Arg-1199 by PRMT5 stimulates phosphorylation at Tyr-1197.

It is found in the cell membrane. Its subcellular location is the endoplasmic reticulum membrane. It localises to the golgi apparatus membrane. The protein resides in the nucleus membrane. The protein localises to the endosome. It is found in the endosome membrane. Its subcellular location is the nucleus. It carries out the reaction L-tyrosyl-[protein] + ATP = O-phospho-L-tyrosyl-[protein] + ADP + H(+). Its activity is regulated as follows. Endocytosis and inhibition of the activated EGFR by phosphatases like PTPRJ and PTPRK constitute immediate regulatory mechanisms. Upon EGF-binding phosphorylates EPS15 that regulates EGFR endocytosis and activity. Moreover, inducible feedback inhibitors including LRIG1, SOCS4, SOCS5 and ERRFI1 constitute alternative regulatory mechanisms for the EGFR signaling. Functionally, receptor tyrosine kinase binding ligands of the EGF family and activating several signaling cascades to convert extracellular cues into appropriate cellular responses. Known ligands include EGF, TGFA/TGF-alpha, AREG, epigen/EPGN, BTC/betacellulin, epiregulin/EREG and HBEGF/heparin-binding EGF. Ligand binding triggers receptor homo- and/or heterodimerization and autophosphorylation on key cytoplasmic residues. The phosphorylated receptor recruits adapter proteins like GRB2 which in turn activates complex downstream signaling cascades. Activates at least 4 major downstream signaling cascades including the RAS-RAF-MEK-ERK, PI3 kinase-AKT, PLCgamma-PKC and STATs modules. May also activate the NF-kappa-B signaling cascade. Also directly phosphorylates other proteins like RGS16, activating its GTPase activity and probably coupling the EGF receptor signaling to the G protein-coupled receptor signaling. Also phosphorylates MUC1 and increases its interaction with SRC and CTNNB1/beta-catenin. Positively regulates cell migration via interaction with CCDC88A/GIV which retains EGFR at the cell membrane following ligand stimulation, promoting EGFR signaling which triggers cell migration. Plays a role in enhancing learning and memory performance. Plays a role in mammalian pain signaling (long-lasting hypersensitivity). The protein is Epidermal growth factor receptor of Mus musculus (Mouse).